The chain runs to 160 residues: Transcription antitermination protein NusB (160 aa).

This sequence belongs to the NusB family.

Involved in transcription antitermination. Required for transcription of ribosomal RNA (rRNA) genes. Binds specifically to the boxA antiterminator sequence of the ribosomal RNA (rrn) operons. In Nitrobacter hamburgensis (strain DSM 10229 / NCIMB 13809 / X14), this protein is Transcription antitermination protein NusB.